The following is a 449-amino-acid chain: Heterogeneous nuclear ribonucleoprotein H2 (449 aa).

The residue at position 1 (methionine 1) is an N-acetylmethionine. Residue methionine 2 is modified to N-acetylmethionine; in Heterogeneous nuclear ribonucleoprotein H2, N-terminally processed. The RRM 1 domain maps to 11–90; it reads FVVKVRGLPW…RYVEVFKSNS (80 aa). The residue at position 23 (serine 23) is a Phosphoserine. A Glycyl lysine isopeptide (Lys-Gly) (interchain with G-Cter in SUMO2) cross-link involves residue lysine 35. Phosphoserine occurs at positions 54 and 63. A Glycyl lysine isopeptide (Lys-Gly) (interchain with G-Cter in SUMO2) cross-link involves residue lysine 87. A Phosphoserine modification is found at serine 90. Lysine 98 participates in a covalent cross-link: Glycyl lysine isopeptide (Lys-Gly) (interchain with G-Cter in SUMO2). The RRM 2 domain maps to 111–188; sequence GFVRLRGLPF…RYIEIFKSSR (78 aa). Arginine 233 is modified (dimethylated arginine; alternate). Residue arginine 233 is modified to Omega-N-methylarginine; alternate. The stretch at 234–249 is one 1-1 repeat; sequence GAYGGGYGGYDDYGGY. Residues 234–433 are 2 X 16 AA Gly-rich approximate repeats; the sequence is GAYGGGYGGY…YGGQSSMSGY (200 aa). Position 246 is a phosphotyrosine (tyrosine 246). Residues 289-364 form the RRM 3 domain; sequence HCVHMRGLPY…RYVELFLNST (76 aa). Position 310 is a phosphoserine (serine 310). 3 repeat units span residues 354–372, 374–392, and 418–433. The segment at 354–392 is 2 X 19 AA perfect repeats; the sequence is HRYVELFLNSTAGTSGGAYDHSYVELFLNSTAGASGGAY.

As to quaternary structure, component of a ribonucleoprotein complex containing mRNAs and RNA-binding proteins including DDX5, HNRNPH2 and SRSF1 as well as splicing regulator ARVCF. Interacts with TXNL4/DIM1.

The protein localises to the nucleus. The protein resides in the nucleoplasm. Functionally, this protein is a component of the heterogeneous nuclear ribonucleoprotein (hnRNP) complexes which provide the substrate for the processing events that pre-mRNAs undergo before becoming functional, translatable mRNAs in the cytoplasm. Binds poly(RG). This is Heterogeneous nuclear ribonucleoprotein H2 (Hnrnph2) from Rattus norvegicus (Rat).